Reading from the N-terminus, the 191-residue chain is Casparian strip membrane protein 4 (191 aa).

Residues 1–27 (MKTGSVEAGEQASEDATPRRGKKLNRG) are Cytoplasmic-facing. A helical membrane pass occupies residues 28-48 (ILILDLVLRVFGAICTLGSAV). The Extracellular segment spans residues 49–72 (AMGTTSQTLPSSSQFFRFRAKYND). A helical membrane pass occupies residues 73-93 (LPMFMFFAIANSIVCAYLVLS). Topologically, residues 94–110 (LRLSIFHIIRSAGIITR) are cytoplasmic. Residues 111–131 (IILVTFDMVMLVLLTCGASAA) traverse the membrane as a helical segment. Residues 132-160 (TSIVYLAHKGNASANWLPFCVRFSHFCNR) are Extracellular-facing. The N-linked (GlcNAc...) asparagine glycan is linked to Asn142. The helical transmembrane segment at 161–181 (ISGSLIGSFFSIIIFMLLVIL) threads the bilayer. Residues 182–191 (SAVSQFSICN) are Cytoplasmic-facing.

It belongs to the Casparian strip membrane proteins (CASP) family. As to quaternary structure, homodimer and heterodimers.

The protein resides in the cell membrane. Regulates membrane-cell wall junctions and localized cell wall deposition. Required for establishment of the Casparian strip membrane domain (CSD) and the subsequent formation of Casparian strips, a cell wall modification of the root endodermis that determines an apoplastic barrier between the intraorganismal apoplasm and the extraorganismal apoplasm and prevents lateral diffusion. The chain is Casparian strip membrane protein 4 from Ricinus communis (Castor bean).